Here is a 182-residue protein sequence, read N- to C-terminus: Large ribosomal subunit protein uL5 (182 aa).

The protein belongs to the universal ribosomal protein uL5 family. As to quaternary structure, part of the 50S ribosomal subunit; part of the 5S rRNA/L5/L18/L25 subcomplex. Contacts the 5S rRNA and the P site tRNA. Forms a bridge to the 30S subunit in the 70S ribosome.

Its function is as follows. This is one of the proteins that bind and probably mediate the attachment of the 5S RNA into the large ribosomal subunit, where it forms part of the central protuberance. In the 70S ribosome it contacts protein S13 of the 30S subunit (bridge B1b), connecting the 2 subunits; this bridge is implicated in subunit movement. Contacts the P site tRNA; the 5S rRNA and some of its associated proteins might help stabilize positioning of ribosome-bound tRNAs. This Coxiella burnetii (strain CbuG_Q212) (Coxiella burnetii (strain Q212)) protein is Large ribosomal subunit protein uL5.